We begin with the raw amino-acid sequence, 201 residues long: Akirin-2 (201 aa).

Ser-18 and Ser-21 each carry phosphoserine. The short motif at 23–28 (KRRRCA) is the Nuclear localization signal element. Ser-55 is modified (phosphoserine). The SYVS motif signature appears at 198 to 201 (SYVS).

Belongs to the akirin family. As to quaternary structure, homodimer. Interacts with IPO9; the interaction is direct. Associates with 20S and 26S proteasomes. Interacts with SMARCD1; promoting SWI/SNF complex recruitment. Interacts with NFKBIZ. Interacts with YWHAB. Polyubiquitinated. Polyubiquitination is dependent of UBR5 that extends pre-ubiquitinated AKIRIN2.

The protein resides in the nucleus. It is found in the cytoplasm. It localises to the membrane. Functionally, molecular adapter that acts as a bridge between a variety of multiprotein complexes, and which is involved in embryonic development, immunity, myogenesis and brain development. Plays a key role in nuclear protein degradation by promoting import of proteasomes into the nucleus: directly binds to fully assembled 20S proteasomes at one end and to nuclear import receptor IPO9 at the other end, bridging them together and mediating the import of pre-assembled proteasome complexes through the nuclear pore. Involved in innate immunity by regulating the production of interleukin-6 (IL6) downstream of Toll-like receptor (TLR): acts by bridging the NF-kappa-B inhibitor NFKBIZ and the SWI/SNF complex, leading to promote induction of IL6. Also involved in adaptive immunity by promoting B-cell activation. Involved in brain development: required for the survival and proliferation of cerebral cortical progenitor cells. Involved in myogenesis: required for skeletal muscle formation and skeletal development, possibly by regulating expression of muscle differentiation factors. Also plays a role in facilitating interdigital tissue regression during limb development. This Mus musculus (Mouse) protein is Akirin-2.